A 239-amino-acid polypeptide reads, in one-letter code: Outer membrane protein PagN (239 aa).

An N-terminal signal peptide occupies residues 1-22; it reads MKNFFAVCIIPLVVAWSATASA. The Periplasmic portion of the chain corresponds to 23-26; sequence KEGI. A beta stranded membrane pass occupies residues 27-36; the sequence is YITGKAGTSV. The Extracellular segment spans residues 37–65; the sequence is VNVYGINSTFSQDEIVNGHATLPDRTKGV. A beta stranded transmembrane segment spans residues 66-76; sequence FGGGVAIGYDF. The Periplasmic segment spans residues 77 to 81; sequence YDPFQ. A beta stranded transmembrane segment spans residues 82-92; it reads LPVRLELDTTF. Residues 93 to 120 lie on the Extracellular side of the membrane; that stretch reads RGETDAKGGQDIIAFGDPVHINVKNQVR. Residues 121-132 form a beta stranded membrane-spanning segment; sequence MTTYMVNGYYDF. Topologically, residues 133–137 are periplasmic; that stretch reads HNSTA. Residues 138 to 148 form a beta stranded membrane-spanning segment; it reads FTPYISAGVGL. The Extracellular portion of the chain corresponds to 149–174; it reads AHVKLSNNTIPVGFGINETLSASKNN. A beta stranded membrane pass occupies residues 175–185; sequence FAWGAGIGAKY. Topologically, residues 186-190 are periplasmic; sequence AVTDN. A beta stranded membrane pass occupies residues 191-200; the sequence is IMIDASYKYI. At 201 to 230 the chain is on the extracellular side; sequence NAGKVSISKNHYAGDEHTAYDADTKAASND. A beta stranded transmembrane segment spans residues 231–239; sequence FMLGITYAF.

Its subcellular location is the cell outer membrane. In terms of biological role, haemagglutinin that facilitates the adhesion to and invasion of epithelial mammalian cells. Utilizes heparinated proteoglycan as a receptor to successfully invade host cells. This is Outer membrane protein PagN (pagN) from Salmonella typhimurium (strain LT2 / SGSC1412 / ATCC 700720).